The chain runs to 84 residues: Mu-conotoxin-like Cal 12.2a (84 aa).

The signal sequence occupies residues 1-19; sequence MKLTCVLVVLLLVLPFGDL. The propeptide occupies 20-42; that stretch reads ITTSNTEDNKRGATPWQNSLKAR. Disulfide bonds link C45–C57, C52–C65, C59–C70, and C64–C76. P48 carries the post-translational modification 4-hydroxyproline. 6'-bromotryptophan is present on W72. 4-hydroxyproline is present on P77. The residue at position 81 (W81) is a 6'-bromotryptophan.

This sequence belongs to the conotoxin O1 superfamily. Expressed by the venom duct.

Its subcellular location is the secreted. Mu-conotoxins block voltage-gated sodium channels. This toxin reversibly blocks voltage-gated sodium channel in cephalopods, with no alteration in the voltage dependence of sodium conductance or on the kinetics of inactivation. The chain is Mu-conotoxin-like Cal 12.2a from Californiconus californicus (California cone).